The chain runs to 348 residues: Phospho-N-acetylmuramoyl-pentapeptide-transferase (348 aa).

10 helical membrane-spanning segments follow: residues 11-31, 68-88, 92-112, 128-148, 165-185, 196-216, 222-242, 251-271, 276-296, and 326-346; these read SWMLLLATVFGLAFFLGIFLG, AGGILFCIVLLTTVFLWLPLG, TWLFVFLIISWGTLGWYDDII, FVIQLIISAITIVTIFSIYKG, VGHSILGKFFYFVLAMLTIVG, LDGLAAGTTCMSALGLLVVAL, PLAQDVSIVLSALIGISFAFL, VFMGDTGSLLIGGVLGSCAVM, LLLILLGGVFVAEAGSVILQV, and VVARFYIAGLLCMILGIIAAL.

It belongs to the glycosyltransferase 4 family. MraY subfamily. Mg(2+) is required as a cofactor.

The protein resides in the cell inner membrane. The enzyme catalyses UDP-N-acetyl-alpha-D-muramoyl-L-alanyl-gamma-D-glutamyl-meso-2,6-diaminopimeloyl-D-alanyl-D-alanine + di-trans,octa-cis-undecaprenyl phosphate = di-trans,octa-cis-undecaprenyl diphospho-N-acetyl-alpha-D-muramoyl-L-alanyl-D-glutamyl-meso-2,6-diaminopimeloyl-D-alanyl-D-alanine + UMP. It participates in cell wall biogenesis; peptidoglycan biosynthesis. In terms of biological role, catalyzes the initial step of the lipid cycle reactions in the biosynthesis of the cell wall peptidoglycan: transfers peptidoglycan precursor phospho-MurNAc-pentapeptide from UDP-MurNAc-pentapeptide onto the lipid carrier undecaprenyl phosphate, yielding undecaprenyl-pyrophosphoryl-MurNAc-pentapeptide, known as lipid I. The chain is Phospho-N-acetylmuramoyl-pentapeptide-transferase from Chlamydia caviae (strain ATCC VR-813 / DSM 19441 / 03DC25 / GPIC) (Chlamydophila caviae).